A 153-amino-acid polypeptide reads, in one-letter code: Lipoprotein signal peptidase (153 aa).

The next 2 membrane-spanning stretches (helical) occupy residues 61 to 81 (YFFVILTVLVIGAALFYLVKN) and 85 to 105 (SLWLVLSLILIISGGIGNFID). Active-site residues include aspartate 114 and aspartate 130. Residues 125 to 145 (IFNVADSYLTVGVLLLILILW) traverse the membrane as a helical segment.

The protein belongs to the peptidase A8 family.

It is found in the cell membrane. The catalysed reaction is Release of signal peptides from bacterial membrane prolipoproteins. Hydrolyzes -Xaa-Yaa-Zaa-|-(S,diacylglyceryl)Cys-, in which Xaa is hydrophobic (preferably Leu), and Yaa (Ala or Ser) and Zaa (Gly or Ala) have small, neutral side chains.. It functions in the pathway protein modification; lipoprotein biosynthesis (signal peptide cleavage). Functionally, this protein specifically catalyzes the removal of signal peptides from prolipoproteins. The polypeptide is Lipoprotein signal peptidase (Streptococcus thermophilus (strain CNRZ 1066)).